The sequence spans 256 residues: Thiazole synthase (256 aa).

Lys96 serves as the catalytic Schiff-base intermediate with DXP. Residues Gly157, 184 to 185 (AG), and 206 to 207 (NT) each bind 1-deoxy-D-xylulose 5-phosphate.

The protein belongs to the ThiG family. In terms of assembly, homotetramer. Forms heterodimers with either ThiH or ThiS.

It localises to the cytoplasm. The enzyme catalyses [ThiS sulfur-carrier protein]-C-terminal-Gly-aminoethanethioate + 2-iminoacetate + 1-deoxy-D-xylulose 5-phosphate = [ThiS sulfur-carrier protein]-C-terminal Gly-Gly + 2-[(2R,5Z)-2-carboxy-4-methylthiazol-5(2H)-ylidene]ethyl phosphate + 2 H2O + H(+). It functions in the pathway cofactor biosynthesis; thiamine diphosphate biosynthesis. In terms of biological role, catalyzes the rearrangement of 1-deoxy-D-xylulose 5-phosphate (DXP) to produce the thiazole phosphate moiety of thiamine. Sulfur is provided by the thiocarboxylate moiety of the carrier protein ThiS. In vitro, sulfur can be provided by H(2)S. The chain is Thiazole synthase from Brucella suis (strain ATCC 23445 / NCTC 10510).